The sequence spans 847 residues: Receptor-like protein 12 (847 aa).

A signal peptide spans 1-27; sequence MMIRSHRHWVFSSRIIIFLSLLVHSLA. The Extracellular segment spans residues 28–798; the sequence is SSSPHFCRDD…LSEAEENMFN (771 aa). 4 N-linked (GlcNAc...) asparagine glycosylation sites follow: asparagine 52, asparagine 66, asparagine 103, and asparagine 132. 25 LRR repeats span residues 109–133, 135–157, 158–181, 183–205, 206–229, 231–253, 254–277, 279–301, 302–325, 326–350, 351–374, 375–398, 400–422, 424–442, 443–466, 467–491, 492–514, 516–539, 541–562, 563–587, 589–613, 657–681, 682–704, 705–729, and 731–754; these read LQYL…LGNL, HLTL…IGNL, NQLR…LGNL, RLVN…IGDL, KQLR…LGNL, NLVH…IGNL, IELR…FANL, KLSI…MSIF, HNLE…LLLI, PSLE…TSSS, TKLQ…ISRL, LNLE…ISKL, NLLH…LWRL, TMVL…SQEE, ALIE…ICKL, SSLG…RNFS, GSIK…IFSK, TELV…LINC, ALEL…WLES, LPSL…HASI, FQSL…YFSN, RRDF…LGYL, KELR…FLAN, LTKL…LAAL, and FLSY…QFQR. The N-linked (GlcNAc...) asparagine glycan is linked to asparagine 180. N-linked (GlcNAc...) asparagine glycans are attached at residues asparagine 210 and asparagine 228. 3 N-linked (GlcNAc...) asparagine glycosylation sites follow: asparagine 263, asparagine 276, and asparagine 289. N-linked (GlcNAc...) asparagine glycosylation is present at asparagine 346. Asparagine 386 carries an N-linked (GlcNAc...) asparagine glycan. Residue asparagine 437 is glycosylated (N-linked (GlcNAc...) asparagine). N-linked (GlcNAc...) asparagine glycans are attached at residues asparagine 489 and asparagine 503. N-linked (GlcNAc...) asparagine glycosylation is present at asparagine 601. Asparagine 688 and asparagine 704 each carry an N-linked (GlcNAc...) asparagine glycan. An N-linked (GlcNAc...) asparagine glycan is attached at asparagine 736. The helical transmembrane segment at 799–819 threads the bilayer; sequence WVAAAIAYGPGVLCGLVIGHF. At 820-847 the chain is on the cytoplasmic side; that stretch reads YTSHNHEWFTEKFGRKQHKALTSVKCSL.

It belongs to the RLP family.

It is found in the cell membrane. Involved in the perception of CLV3 and CLV3-like peptides, that act as extracellular signals regulating meristems maintenance. The chain is Receptor-like protein 12 from Arabidopsis thaliana (Mouse-ear cress).